The chain runs to 299 residues: Elongation factor Ts, mitochondrial (299 aa).

A mitochondrion-targeting transit peptide spans 1 to 18 (MLFQRRLHFHQFFGKTRV).

Belongs to the EF-Ts family.

Its subcellular location is the mitochondrion. In terms of biological role, associates with the EF-Tu.GDP complex and induces the exchange of GDP to GTP. It remains bound to the aminoacyl-tRNA.EF-Tu.GTP complex up to the GTP hydrolysis stage on the ribosome. In Schizosaccharomyces pombe (strain 972 / ATCC 24843) (Fission yeast), this protein is Elongation factor Ts, mitochondrial (tsf1).